The primary structure comprises 585 residues: Mitochondrial sodium/calcium exchanger protein (585 aa).

The signal sequence occupies residues 1-26 (MAGRWLDPLWAPGFLCVALILETASG). Over 27–95 (AGDLSTKAHG…GIFCYFPPNL (69 aa)) the chain is Extracellular. N-linked (GlcNAc...) asparagine glycosylation occurs at Asn-46. The helical transmembrane segment at 96 to 116 (LPLAITLYVFWLLYLFLILGV) threads the bilayer. Residues 117 to 140 (TAAKFFCPNLSAISTSLKLSHNVA) are Cytoplasmic-facing. The helical transmembrane segment at 141 to 161 (GVTFLAFGNGAPDIFSALVAF) threads the bilayer. At 162 to 168 (SDPRTAG) the chain is on the extracellular side. The chain crosses the membrane as a helical span at residues 169-189 (LAIGALFGAGVLVTTVVAGGI). Residues 190–205 (TILRPFMAASRPFLRD) lie on the Cytoplasmic side of the membrane. A helical transmembrane segment spans residues 206 to 226 (ITFYMVAVFLTFTALYLGRIT). Leu-227 is a topological domain (extracellular). Residues 228–247 (VWALGYLGLYVFYVVTVIIC) form a helical membrane-spanning segment. The Cytoplasmic portion of the chain corresponds to 248–325 (TWVYQRQRSR…KWRTQSISCK (78 aa)). At Ser-258 the chain carries Phosphoserine; by PKA. Residues 326-346 (LLKVAKLPVEFLLLLTVPVVD) traverse the membrane as a helical segment. The Extracellular portion of the chain corresponds to 347 to 360 (PDKDDRNWKRPLNC). A helical membrane pass occupies residues 361–381 (LQLVISPLVLVLTLQSGVYGI). Topologically, residues 382–383 (YE) are cytoplasmic. The helical transmembrane segment at 384–404 (IGGLLPVWAVVVIVGTALASV) threads the bilayer. Over 405 to 416 (TFFATSNSEPPR) the chain is Extracellular. A helical membrane pass occupies residues 417–437 (LHWLFAFLGFLTSALWINAAA). At 438 to 445 (TEVVNILR) the chain is on the cytoplasmic side. The helical transmembrane segment at 446–466 (SLGVVFRLSNTVLGLTLLAWG) threads the bilayer. Topologically, residues 467–491 (NSIGDAFSDFTLARQGYPRMAFSAC) are extracellular. The chain crosses the membrane as a helical span at residues 492–512 (FGGIIFNILVGVGLGCLLQIV). Residues 513-525 (RSHASEVKLEPDG) are Cytoplasmic-facing. A helical transmembrane segment spans residues 526-546 (LLVWVLASALGLSLVFSLVSV). At 547 to 559 (PLQCFQLSKAYGL) the chain is on the extracellular side. The helical transmembrane segment at 560 to 580 (CLLLFYICFIVVVLLTEFGVI) threads the bilayer. Topologically, residues 581-585 (HLKAD) are cytoplasmic.

The protein belongs to the Ca(2+):cation antiporter (CaCA) (TC 2.A.19) family. SLC24A subfamily. Post-translationally, phosphorylation at Ser-258 by PKA prevents calcium overload. In terms of tissue distribution, widely expressed. Present at higher level in pancreas, stomach, skeletal muscle and skin (at protein level). Ubiquitously expressed.

It localises to the mitochondrion inner membrane. The enzyme catalyses Ca(2+)(in) + 3 Na(+)(out) = Ca(2+)(out) + 3 Na(+)(in). It catalyses the reaction 3 Li(+)(out) + Ca(2+)(in) = 3 Li(+)(in) + Ca(2+)(out). Inhibited by the sodium/calcium exchanger inhibitor CGP-37157. Strongly inhibited by zinc. Mitochondrial sodium/calcium antiporter that mediates sodium-dependent calcium efflux from mitochondrion, by mediating the exchange of 3 sodium ions per 1 calcium ion. Plays a central role in mitochondrial calcium homeostasis by mediating mitochondrial calcium extrusion: calcium efflux is essential for mitochondrial function and cell survival, notably in cardiomyocytes. Regulates rates of glucose-dependent insulin secretion in pancreatic beta-cells during the first phase of insulin secretion: acts by mediating efflux of calcium from mitochondrion, thereby affecting cytoplasmic calcium responses. Required for store-operated Ca(2+) entry (SOCE) and Ca(2+) release-activated Ca(2+) (CRAC) channel regulation: sodium transport by SLC8B1 leads to promote calcium-shuttling that modulates mitochondrial redox status, thereby regulating SOCE activity. Involved in B-lymphocyte chemotaxis. Able to transport Ca(2+) in exchange of either Li(+) or Na(+), explaining how Li(+) catalyzes Ca(2+) exchange. In contrast to other members of the family its function is independent of K(+). The chain is Mitochondrial sodium/calcium exchanger protein from Rattus norvegicus (Rat).